Reading from the N-terminus, the 350-residue chain is Glycogenin-1 (350 aa).

Thr2 carries the post-translational modification N-acetylthreonine. UDP contacts are provided by Leu9, Thr11, Asn12, and Tyr15. 4 residues coordinate UDP-alpha-D-glucose: Leu9, Thr11, Asn12, and Tyr15. The residue at position 44 (Ser44) is a Phosphoserine. Arg77 is a binding site for UDP. UDP-alpha-D-glucose-binding residues include Arg77, Lys86, Asp102, Ala103, Asp104, Asn133, Ser134, Asp160, Asp163, and Gln164. UDP contacts are provided by Asp102, Ala103, and Asp104. Asp102 contributes to the Mn(2+) binding site. Asp104 lines the Mn(2+) pocket. Tyr195 carries O-linked (Glc...) tyrosine glycosylation. His212, Gly215, and Lys218 together coordinate UDP. Residue His212 coordinates Mn(2+). 2 residues coordinate UDP-alpha-D-glucose: Gly215 and Lys218. An interaction with GYS1 region spans residues 301–333 (SHLSLGEIPAMAQPFVSSEERKERWEQGQADYM).

The protein belongs to the glycosyltransferase 8 family. Glycogenin subfamily. As to quaternary structure, part of the GYS1-GYG1 complex, a heterooctamer composed of a tetramer of GYS1 and 2 dimers of GYG1, where each GYS1 protomer binds to one GYG1 subunit (via GYG1 C-terminus); the GYS1 tetramer may dissociate from GYG1 dimers to continue glycogen polymerization on its own. May also form a heterooctamer complex with GYS2 (via GYG1 C-terminus). Requires Mn(2+) as cofactor. Self-glycosylated by the transfer of glucose residues from UDP-glucose to itself, forming an alpha-1,4-glycan of around 10 residues attached to Tyr-195. Post-translationally, phosphorylated. In terms of tissue distribution, highly expressed in skeletal muscle and heart, with lower levels in brain, lung, kidney and pancreas.

The protein localises to the cytoplasm. The protein resides in the nucleus. It catalyses the reaction L-tyrosyl-[glycogenin] + UDP-alpha-D-glucose = alpha-D-glucosyl-L-tyrosyl-[glycogenin] + UDP + H(+). It carries out the reaction [1,4-alpha-D-glucosyl](n)-L-tyrosyl-[glycogenin] + UDP-alpha-D-glucose = [1,4-alpha-D-glucosyl](n+1)-L-tyrosyl-[glycogenin] + UDP + H(+). It participates in glycan biosynthesis; glycogen biosynthesis. Its activity is regulated as follows. Inhibited by palladium ions. In terms of biological role, glycogenin participates in the glycogen biosynthetic process along with glycogen synthase and glycogen branching enzyme. It catalyzes the formation of a short alpha (1,4)-glucosyl chain covalently attached via a glucose 1-O-tyrosyl linkage to internal tyrosine residues and these chains act as primers for the elongation reaction catalyzed by glycogen synthase. The chain is Glycogenin-1 from Homo sapiens (Human).